The chain runs to 792 residues: Probable exo-1,4-beta-xylosidase xlnD (792 aa).

A signal peptide spans 1–20; sequence MSVAKSIAAVLVALLPGALA. N-linked (GlcNAc...) asparagine glycosylation is found at Asn-23, Asn-87, Asn-118, Asn-142, and Asn-246. Asp-310 is a catalytic residue. N-linked (GlcNAc...) asparagine glycans are attached at residues Asn-326, Asn-385, Asn-404, Asn-440, Asn-477, Asn-518, Asn-679, and Asn-701.

This sequence belongs to the glycosyl hydrolase 3 family.

The protein localises to the secreted. It catalyses the reaction Hydrolysis of (1-&gt;4)-beta-D-xylans, to remove successive D-xylose residues from the non-reducing termini.. It participates in glycan degradation; xylan degradation. Xylan 1,4-beta-xylosidase involved in the hydrolysis of xylan, a major structural heterogeneous polysaccharide found in plant biomass representing the second most abundant polysaccharide in the biosphere, after cellulose. The chain is Probable exo-1,4-beta-xylosidase xlnD (xlnD) from Aspergillus fumigatus (strain CBS 144.89 / FGSC A1163 / CEA10) (Neosartorya fumigata).